Consider the following 432-residue polypeptide: tRNA(Ile)-lysidine synthase (432 aa).

Residue 20-25 (SGGLDS) participates in ATP binding.

The protein belongs to the tRNA(Ile)-lysidine synthase family.

It localises to the cytoplasm. It catalyses the reaction cytidine(34) in tRNA(Ile2) + L-lysine + ATP = lysidine(34) in tRNA(Ile2) + AMP + diphosphate + H(+). Ligates lysine onto the cytidine present at position 34 of the AUA codon-specific tRNA(Ile) that contains the anticodon CAU, in an ATP-dependent manner. Cytidine is converted to lysidine, thus changing the amino acid specificity of the tRNA from methionine to isoleucine. The chain is tRNA(Ile)-lysidine synthase from Shigella flexneri.